Reading from the N-terminus, the 263-residue chain is Diphthine synthase (263 aa).

S-adenosyl-L-methionine-binding positions include L9, D84, M87, S112 to I113, L164, A207, and H232.

The protein belongs to the diphthine synthase family. Homodimer.

It catalyses the reaction 2-[(3S)-amino-3-carboxypropyl]-L-histidyl-[translation elongation factor 2] + 3 S-adenosyl-L-methionine = diphthine-[translation elongation factor 2] + 3 S-adenosyl-L-homocysteine + 3 H(+). It participates in protein modification; peptidyl-diphthamide biosynthesis. Its function is as follows. S-adenosyl-L-methionine-dependent methyltransferase that catalyzes the trimethylation of the amino group of the modified target histidine residue in translation elongation factor 2 (EF-2), to form an intermediate called diphthine. The three successive methylation reactions represent the second step of diphthamide biosynthesis. The protein is Diphthine synthase of Methanosphaera stadtmanae (strain ATCC 43021 / DSM 3091 / JCM 11832 / MCB-3).